A 340-amino-acid polypeptide reads, in one-letter code: Phosphate acyltransferase (340 aa).

This sequence belongs to the PlsX family. As to quaternary structure, homodimer. Probably interacts with PlsY.

The protein localises to the cytoplasm. The catalysed reaction is a fatty acyl-[ACP] + phosphate = an acyl phosphate + holo-[ACP]. It functions in the pathway lipid metabolism; phospholipid metabolism. Catalyzes the reversible formation of acyl-phosphate (acyl-PO(4)) from acyl-[acyl-carrier-protein] (acyl-ACP). This enzyme utilizes acyl-ACP as fatty acyl donor, but not acyl-CoA. The chain is Phosphate acyltransferase from Nostoc punctiforme (strain ATCC 29133 / PCC 73102).